A 329-amino-acid chain; its full sequence is uncharacterized protein (329 aa).

Positions 38 to 184 constitute an SIS domain; sequence IVKLILKSQE…MACLMRAKNF (147 aa). An ATP-binding site is contributed by 56-61; the sequence is GVGKSA. CBS domains are found at residues 211 to 267 and 270 to 329; these read QTTN…GVSL and EVRH…GLKA.

It belongs to the SIS family. GutQ/KpsF subfamily.

This is an uncharacterized protein from Helicobacter pylori (strain ATCC 700392 / 26695) (Campylobacter pylori).